Reading from the N-terminus, the 368-residue chain is Dual-specificity RNA methyltransferase RlmN (368 aa).

The active-site Proton acceptor is the E94. Residues 100-334 (EEDRATLCVS…VIVRKTRGDD (235 aa)) form the Radical SAM core domain. An intrachain disulfide couples C107 to C339. Residues C114, C118, and C121 each coordinate [4Fe-4S] cluster. Residues 163–164 (GE), S195, 217–219 (SLH), and N296 contribute to the S-adenosyl-L-methionine site. Catalysis depends on C339, which acts as the S-methylcysteine intermediate.

Belongs to the radical SAM superfamily. RlmN family. It depends on [4Fe-4S] cluster as a cofactor.

The protein resides in the cytoplasm. It catalyses the reaction adenosine(2503) in 23S rRNA + 2 reduced [2Fe-2S]-[ferredoxin] + 2 S-adenosyl-L-methionine = 2-methyladenosine(2503) in 23S rRNA + 5'-deoxyadenosine + L-methionine + 2 oxidized [2Fe-2S]-[ferredoxin] + S-adenosyl-L-homocysteine. The enzyme catalyses adenosine(37) in tRNA + 2 reduced [2Fe-2S]-[ferredoxin] + 2 S-adenosyl-L-methionine = 2-methyladenosine(37) in tRNA + 5'-deoxyadenosine + L-methionine + 2 oxidized [2Fe-2S]-[ferredoxin] + S-adenosyl-L-homocysteine. Specifically methylates position 2 of adenine 2503 in 23S rRNA and position 2 of adenine 37 in tRNAs. m2A2503 modification seems to play a crucial role in the proofreading step occurring at the peptidyl transferase center and thus would serve to optimize ribosomal fidelity. The chain is Dual-specificity RNA methyltransferase RlmN from Aeromonas salmonicida (strain A449).